The following is a 251-amino-acid chain: CDP-diacylglycerol pyrophosphatase (251 aa).

A helical membrane pass occupies residues 4–24 (AGLLFLVMIVIAVVAAGIGYW).

This sequence belongs to the Cdh family.

Its subcellular location is the cell inner membrane. It carries out the reaction a CDP-1,2-diacyl-sn-glycerol + H2O = a 1,2-diacyl-sn-glycero-3-phosphate + CMP + 2 H(+). Its pathway is phospholipid metabolism; CDP-diacylglycerol degradation; phosphatidate from CDP-diacylglycerol: step 1/1. The chain is CDP-diacylglycerol pyrophosphatase from Escherichia coli (strain ATCC 8739 / DSM 1576 / NBRC 3972 / NCIMB 8545 / WDCM 00012 / Crooks).